Here is a 383-residue protein sequence, read N- to C-terminus: uncharacterized protein (383 aa).

Residues 6–26 (LFLFSCLYFIGGNLKALVLGI) form a helical membrane-spanning segment. The ATP-grasp domain occupies 131–303 (YKKLKNLGFN…LAMVLLNNKY (173 aa)).

It localises to the membrane. This is an uncharacterized protein from Methanocaldococcus jannaschii (strain ATCC 43067 / DSM 2661 / JAL-1 / JCM 10045 / NBRC 100440) (Methanococcus jannaschii).